The primary structure comprises 282 residues: Glutamyl endopeptidase (282 aa).

The N-terminal stretch at methionine 1–alanine 27 is a signal peptide. The propeptide occupies lysine 28–serine 66. Catalysis depends on charge relay system residues histidine 117, aspartate 159, and serine 235.

The protein belongs to the peptidase S1B family.

The protein localises to the secreted. It carries out the reaction Preferential cleavage: Glu-|-Xaa, Asp-|-Xaa.. Functionally, exhibits a significant hydrolytic activity for the carbonyl side of glutamic acid. Shows activity toward human fibronectin and type 1 collagen. This Staphylococcus epidermidis (strain ATCC 35984 / DSM 28319 / BCRC 17069 / CCUG 31568 / BM 3577 / RP62A) protein is Glutamyl endopeptidase (gseA).